A 398-amino-acid polypeptide reads, in one-letter code: Stimulator of interferon genes protein (398 aa).

At 1-16 (MSVMGEDALVPRARSR) the chain is on the cytoplasmic side. Residues 17 to 37 (LPVMCAAGLGFLTLAVAWLLD) form a helical membrane-spanning segment. Residues 38–44 (SDKFSER) are Lumenal-facing. The chain crosses the membrane as a helical span at residues 45 to 65 (AGIIAFGLMLERFIYCICLLA). Residues 66–91 (EELLFHSRQRYHGRMSEIFRACFRGS) lie on the Cytoplasmic side of the membrane. A helical transmembrane segment spans residues 92 to 112 (GILGMCAIFLMLMLGGVSFSV). Over 113–120 (KQWSHFNL) the chain is Lumenal. Residues 121 to 141 (MCAGYMLLNSLGVLGPAPVEI) traverse the membrane as a helical segment. At 142 to 398 (SEICEAKKMN…FNPSSAMKQN (257 aa)) the chain is on the cytoplasmic side. Residues 150–331 (MNVAHGLAWS…QNLKQQDGEI (182 aa)) are cyclic dinucleotide-binding domain (CBD). Positions 159, 164, 230, and 254 each coordinate 2',3'-cGAMP. Residues Ser-159, Tyr-164, 230 to 233 (RSYT), and Thr-254 contribute to the 3',3'-c-di-GMP site. The tract at residues 375–398 (PQSLRSEPVETTDYFNPSSAMKQN) is disordered. Polar residues predominate over residues 387-398 (DYFNPSSAMKQN).

Belongs to the STING family. Homodimer; forms a homodimer in absence of cyclic nucleotide (c-di-GMP or cGAMP). Homotetramer; in presence of cyclic nucleotide (c-di-GMP or cGAMP), forms tetramers and higher-order oligomers through side-by-side packing. Interacts (when phosphorylated) with irf3; following activation and phosphorylation by tbk1, recruits irf3. In terms of processing, phosphorylation by TBK1 leads to activation and production of IFN-beta. Following cyclic nucleotide (c-di-GMP or cGAMP)-binding, activation and translocation from the endoplasmic reticulum, STING1 is phosphorylated by tbk1, leading to recruitment of the transcription factor irf3 to induce type-I interferons and other cytokines.

It is found in the endoplasmic reticulum membrane. The protein localises to the cytoplasm. Its subcellular location is the perinuclear region. The protein resides in the endoplasmic reticulum-Golgi intermediate compartment membrane. It localises to the golgi apparatus membrane. It is found in the cytoplasmic vesicle. The protein localises to the autophagosome membrane. The catalysed reaction is H(+)(in) = H(+)(out). Its function is as follows. Facilitator of innate immune signaling that acts as a sensor of cytosolic DNA from bacteria and viruses and promotes the production of type I interferon (IFN-alpha and IFN-beta). Innate immune response is triggered in response to non-CpG double-stranded DNA from viruses and bacteria delivered to the cytoplasm. Acts by binding cyclic dinucleotides: recognizes and binds cyclic di-GMP (c-di-GMP), a second messenger produced by bacteria, and cyclic GMP-AMP (cGAMP), a messenger produced by CGAS in response to DNA virus in the cytosol. Upon binding of c-di-GMP or cGAMP, STING1 oligomerizes and is able to activate both NF-kappa-B and irf3 transcription pathways to induce expression of type I interferon and exert a potent anti-viral state. Exhibits 2',3' phosphodiester linkage-specific ligand recognition: can bind both 2'-3' linked cGAMP and 3'-3' linked cGAMP but is preferentially activated by 2'-3' linked cGAMP. In addition to promote the production of type I interferons, plays a direct role in autophagy. Following cGAMP-binding, STING1 buds from the endoplasmic reticulum into COPII vesicles, which then form the endoplasmic reticulum-Golgi intermediate compartment (ERGIC). The ERGIC serves as the membrane source for LC3 lipidation, leading to formation of autophagosomes that target cytosolic DNA or DNA viruses for degradation by the lysosome. Promotes autophagy by acting as a proton channel that directs proton efflux from the Golgi to facilitate LC3 lipidation. The autophagy- and interferon-inducing activities can be uncoupled and autophagy induction is independent of TBK1 phosphorylation. The sequence is that of Stimulator of interferon genes protein from Danio rerio (Zebrafish).